The following is a 609-amino-acid chain: MCGIVGAIAQRDVAEILLEGLRRLEYRGYDSAGLAVVDAEGHMTRLRRLGKVQMLAQAAEEHPLHGGTGIAHTRWATHGEPSEANAHPHVSEHIVVVHNGIIENHEPLREALKARGYTFVSETDTEVIAHLVNWELKQGGTLRDAILRAIPQLRGAYGTVIMDTRHPDTLLAARSGSPLVIGLGMGENFIASDQLALLPVTRRFIFLEEGDIAEITRRSVNIFDNTGAEVKRQDIESNLQYDAGDKGIYRHYMQKEIYEQPNAIKNTLTGRISHGQVDLSELGPNADDLLSKVEHIQILACGTSYNSGMVSRYWFESLAGIPCDVEIASEFRYRKSAVRRNSLMITLSQSGETADTLAGLRLSKELGYLGSLAICNVPGSSLVRESDLALMTNAGTEIGVASTKAFTTQLTVLLMLVAKLSRLKGLDASIEHDIVHGLQALPSRIEQMLSQDKRIELLAEDFSDKHHALFLGRGDQYPIALEGALKLKEISYIHAEAYAAGELKHGPLALIDADMPVIVVAPNNELLEKLKSNIEEVRARGGQLYVFSDQDAGFVSSDNMHIIEMPHVEEVIAPIFYTVPLQLLAYHVALIKGTDVDQPRNLAKSVTVE.

The Nucleophile; for GATase activity role is filled by C2. The Glutamine amidotransferase type-2 domain occupies 2–218; that stretch reads CGIVGAIAQR…EGDIAEITRR (217 aa). SIS domains lie at 286 to 426 and 458 to 599; these read ADDL…LKGL and LAED…VDQP. The active-site For Fru-6P isomerization activity is K604.

Homodimer.

It is found in the cytoplasm. It catalyses the reaction D-fructose 6-phosphate + L-glutamine = D-glucosamine 6-phosphate + L-glutamate. Its function is as follows. Catalyzes the first step in hexosamine metabolism, converting fructose-6P into glucosamine-6P using glutamine as a nitrogen source. The polypeptide is Glutamine--fructose-6-phosphate aminotransferase [isomerizing] (Salmonella typhi).